The sequence spans 280 residues: Formamidopyrimidine-DNA glycosylase (280 aa).

Proline 2 serves as the catalytic Schiff-base intermediate with DNA. Glutamate 3 functions as the Proton donor in the catalytic mechanism. The Proton donor; for beta-elimination activity role is filled by lysine 60. Residues histidine 93 and arginine 112 each coordinate DNA. The FPG-type zinc-finger motif lies at 240–274 (YVYGQHSKPCRVCGADIIKIKVGGRGTHLCPTCQP). The Proton donor; for delta-elimination activity role is filled by arginine 264.

Belongs to the FPG family. As to quaternary structure, monomer. Zn(2+) is required as a cofactor.

The catalysed reaction is Hydrolysis of DNA containing ring-opened 7-methylguanine residues, releasing 2,6-diamino-4-hydroxy-5-(N-methyl)formamidopyrimidine.. The enzyme catalyses 2'-deoxyribonucleotide-(2'-deoxyribose 5'-phosphate)-2'-deoxyribonucleotide-DNA = a 3'-end 2'-deoxyribonucleotide-(2,3-dehydro-2,3-deoxyribose 5'-phosphate)-DNA + a 5'-end 5'-phospho-2'-deoxyribonucleoside-DNA + H(+). Its function is as follows. Involved in base excision repair of DNA damaged by oxidation or by mutagenic agents. Acts as a DNA glycosylase that recognizes and removes damaged bases. Has a preference for oxidized purines, such as 7,8-dihydro-8-oxoguanine (8-oxoG). Has AP (apurinic/apyrimidinic) lyase activity and introduces nicks in the DNA strand. Cleaves the DNA backbone by beta-delta elimination to generate a single-strand break at the site of the removed base with both 3'- and 5'-phosphates. The protein is Formamidopyrimidine-DNA glycosylase of Oceanobacillus iheyensis (strain DSM 14371 / CIP 107618 / JCM 11309 / KCTC 3954 / HTE831).